The following is a 138-amino-acid chain: Large ribosomal subunit protein uL16 (138 aa).

Basic residues predominate over residues 1–13 (MLQPARRKYRKEQ). The disordered stretch occupies residues 1–22 (MLQPARRKYRKEQKGRNTGIAT).

This sequence belongs to the universal ribosomal protein uL16 family. As to quaternary structure, part of the 50S ribosomal subunit.

In terms of biological role, binds 23S rRNA and is also seen to make contacts with the A and possibly P site tRNAs. The sequence is that of Large ribosomal subunit protein uL16 from Delftia acidovorans (strain DSM 14801 / SPH-1).